The sequence spans 379 residues: V-type proton ATPase subunit S1 (379 aa).

The signal sequence occupies residues 1–17 (MLWKSLIALCVIGAAVA). Topologically, residues 18–333 (EQTPVFLWGA…WDCVGFVTPG (316 aa)) are lumenal. Asparagine 225 and asparagine 284 each carry an N-linked (GlcNAc...) asparagine glycan. A disulfide bond links cysteine 282 and cysteine 326. The chain crosses the membrane as a helical span at residues 334–354 (ILMGLFVVALLLVIMFVGVCW). At 355-379 (MMDINTMDRFDDPKGKTITINAAAE) the chain is on the cytoplasmic side.

This sequence belongs to the vacuolar ATPase subunit S1 family. As to quaternary structure, accessory component of the multisubunit proton-transporting vacuolar (V)-ATPase protein pump. May interact with ATP6AP2.

It is found in the endoplasmic reticulum membrane. Its function is as follows. Accessory subunit of the proton-transporting vacuolar (V)-ATPase protein pump, which is required for luminal acidification of secretory vesicles. This is V-type proton ATPase subunit S1 from Drosophila melanogaster (Fruit fly).